The following is a 70-amino-acid chain: Large ribosomal subunit protein eL43 (70 aa).

The Zn(2+) site is built by cysteine 36, cysteine 39, cysteine 55, and cysteine 58. The C4-type zinc-finger motif lies at 36–58 (CPYCKTTGKVIRLASGIWYCKKC).

The protein belongs to the eukaryotic ribosomal protein eL43 family. Putative zinc-binding subfamily. Part of the 50S ribosomal subunit. Zn(2+) serves as cofactor.

Functionally, binds to the 23S rRNA. In Saccharolobus solfataricus (strain ATCC 35092 / DSM 1617 / JCM 11322 / P2) (Sulfolobus solfataricus), this protein is Large ribosomal subunit protein eL43.